A 134-amino-acid polypeptide reads, in one-letter code: Profilin-3 (134 aa).

An intrachain disulfide couples C13 to C118. The Involved in PIP2 interaction motif lies at 84–100; the sequence is AVIRGKKGSGGITIKKT. T114 carries the phosphothreonine modification.

The protein belongs to the profilin family. Occurs in many kinds of cells as a complex with monomeric actin in a 1:1 ratio. Post-translationally, phosphorylated by MAP kinases.

Its subcellular location is the cytoplasm. It localises to the cytoskeleton. Its function is as follows. Binds to actin and affects the structure of the cytoskeleton. At high concentrations, profilin prevents the polymerization of actin, whereas it enhances it at low concentrations. This Olea europaea (Common olive) protein is Profilin-3.